The primary structure comprises 97 residues: Co-chaperonin GroES (97 aa).

The protein belongs to the GroES chaperonin family. Heptamer of 7 subunits arranged in a ring. Interacts with the chaperonin GroEL.

The protein resides in the cytoplasm. Functionally, together with the chaperonin GroEL, plays an essential role in assisting protein folding. The GroEL-GroES system forms a nano-cage that allows encapsulation of the non-native substrate proteins and provides a physical environment optimized to promote and accelerate protein folding. GroES binds to the apical surface of the GroEL ring, thereby capping the opening of the GroEL channel. The polypeptide is Co-chaperonin GroES (Bifidobacterium longum (strain NCC 2705)).